We begin with the raw amino-acid sequence, 543 residues long: CTP synthase (543 aa).

The amidoligase domain stretch occupies residues 1-265; that stretch reads MARYIFITGG…DDEVLAAFAI (265 aa). Residue Ser13 participates in CTP binding. Position 13 (Ser13) interacts with UTP. Position 14-19 (14-19) interacts with ATP; sequence SLGKGL. Tyr54 is an L-glutamine binding site. Asp71 is a binding site for ATP. Residues Asp71 and Glu139 each contribute to the Mg(2+) site. Residues 146–148, 186–191, and Lys222 each bind CTP; these read DIE and KTKPTQ. Residues 186–191 and Lys222 contribute to the UTP site; that span reads KTKPTQ. Position 238-240 (238-240) interacts with ATP; the sequence is RDA. Residues 291–542 enclose the Glutamine amidotransferase type-1 domain; it reads TIAIVGKYTG…VQAALVQSRL (252 aa). Residue Gly353 coordinates L-glutamine. Cys380 serves as the catalytic Nucleophile; for glutamine hydrolysis. L-glutamine contacts are provided by residues 381–384, Glu404, and Arg470; that span reads FGMQ. Residues His515 and Glu517 contribute to the active site.

It belongs to the CTP synthase family. In terms of assembly, homotetramer.

It carries out the reaction UTP + L-glutamine + ATP + H2O = CTP + L-glutamate + ADP + phosphate + 2 H(+). It catalyses the reaction L-glutamine + H2O = L-glutamate + NH4(+). The enzyme catalyses UTP + NH4(+) + ATP = CTP + ADP + phosphate + 2 H(+). Its pathway is pyrimidine metabolism; CTP biosynthesis via de novo pathway; CTP from UDP: step 2/2. Its activity is regulated as follows. Allosterically activated by GTP, when glutamine is the substrate; GTP has no effect on the reaction when ammonia is the substrate. The allosteric effector GTP functions by stabilizing the protein conformation that binds the tetrahedral intermediate(s) formed during glutamine hydrolysis. Inhibited by the product CTP, via allosteric rather than competitive inhibition. Functionally, catalyzes the ATP-dependent amination of UTP to CTP with either L-glutamine or ammonia as the source of nitrogen. Regulates intracellular CTP levels through interactions with the four ribonucleotide triphosphates. The chain is CTP synthase from Rhodopseudomonas palustris (strain ATCC BAA-98 / CGA009).